The chain runs to 215 residues: T-complex protein 10A homolog 1 (215 aa).

A disordered region spans residues 1–25 (MLAGQLEARDPKEGTHPEDPCPGAG). Positions 7 to 19 (EARDPKEGTHPED) are enriched in basic and acidic residues. The stretch at 69–110 (ADVHGKLRSHIDALREQNMELREKLRALQLQRWKARKKSAAS) forms a coiled coil. Positions 75–96 (LRSHIDALREQNMELREKLRAL) are leucine-zipper. Residues 150–163 (ATLLGQRSSSNNSA) are compositionally biased toward polar residues. The disordered stretch occupies residues 150-215 (ATLLGQRSSS…TPCAERRGGV (66 aa)).

This sequence belongs to the TCP10 family. In terms of assembly, self-associates (via leucine zipper). Interacts (via leucine zipper) with ZIPK/DAPK3 (via leucine zipper). Interacts with MAD4. Expressed in liver and testis. Expressed in the seminiferous tubules (at protein level).

It localises to the nucleus. Functionally, may be involved in transcriptional regulation. Has in vitro transcription inhibition activity. Acts as a tumor suppressor in hepatocellular carcinoma (HCC) cells. The polypeptide is T-complex protein 10A homolog 1 (TCP10L) (Homo sapiens (Human)).